Here is a 185-residue protein sequence, read N- to C-terminus: dTDP-4-dehydrorhamnose 3,5-epimerase (185 aa).

Residues R23, E28, 47–49 (QDN), and R59 each bind substrate. The Proton acceptor role is filled by H62. Residues K72 and H119 each contribute to the substrate site. Residue Y132 is the Proton donor of the active site. Substrate is bound by residues D143 and K168.

This sequence belongs to the dTDP-4-dehydrorhamnose 3,5-epimerase family. Homodimer.

The enzyme catalyses dTDP-4-dehydro-6-deoxy-alpha-D-glucose = dTDP-4-dehydro-beta-L-rhamnose. It participates in carbohydrate biosynthesis; dTDP-L-rhamnose biosynthesis. The protein operates within bacterial outer membrane biogenesis; LPS O-antigen biosynthesis. In terms of biological role, catalyzes the epimerization of the C3' and C5'positions of dTDP-6-deoxy-D-xylo-4-hexulose, forming dTDP-6-deoxy-L-lyxo-4-hexulose. This chain is dTDP-4-dehydrorhamnose 3,5-epimerase (rfbC), found in Escherichia coli (strain K12).